Reading from the N-terminus, the 174-residue chain is Bacterial proteasome activator (174 aa).

2 disordered regions span residues 1-37 and 153-174; these read MNNDNDDSIEIIGGVDPRTMATRGEDESRDSDEPSLT and SALPPGMGKPGQAGGQGTGQYL. The span at 160-174 shows a compositional bias: gly residues; sequence GKPGQAGGQGTGQYL. The short motif at 172 to 174 is the HbYX motif element; the sequence is QYL.

This sequence belongs to the Bpa family. Forms a homooligomeric, either hexameric or heptameric, ring-like structure which stacks co-axially with the proteasomal alpha-rings.

Interacts with the core proteasome alpha-subunit (PrcA) through its C-terminal hydrophobic-tyrosine-X motif (HbYX motif). Interaction of Bpa with the proteasome stimulates proteasomal peptidase and casein degradation activity, which suggests Bpa could play a role in the removal of non-native or damaged proteins by influencing the conformation of the proteasome complex upon interaction. This Mycobacterium leprae (strain TN) protein is Bacterial proteasome activator (bpa).